The chain runs to 1036 residues: Isoleucine--tRNA ligase (1036 aa).

Residues 46-56 carry the 'HIGH' region motif; sequence PFATGLPHYGH. The 'KMSKS' region signature appears at 589–593; it reads KMSKR. Lysine 592 is an ATP binding site.

This sequence belongs to the class-I aminoacyl-tRNA synthetase family. IleS type 2 subfamily. Monomer. Requires Zn(2+) as cofactor.

Its subcellular location is the cytoplasm. It carries out the reaction tRNA(Ile) + L-isoleucine + ATP = L-isoleucyl-tRNA(Ile) + AMP + diphosphate. Functionally, catalyzes the attachment of isoleucine to tRNA(Ile). As IleRS can inadvertently accommodate and process structurally similar amino acids such as valine, to avoid such errors it has two additional distinct tRNA(Ile)-dependent editing activities. One activity is designated as 'pretransfer' editing and involves the hydrolysis of activated Val-AMP. The other activity is designated 'posttransfer' editing and involves deacylation of mischarged Val-tRNA(Ile). The polypeptide is Isoleucine--tRNA ligase (Chlamydia trachomatis serovar A (strain ATCC VR-571B / DSM 19440 / HAR-13)).